Reading from the N-terminus, the 273-residue chain is Shikimate dehydrogenase (NADP(+)) (273 aa).

Residues 18 to 20 and threonine 65 contribute to the shikimate site; that span reads SKS. Catalysis depends on lysine 69, which acts as the Proton acceptor. Glutamate 81 lines the NADP(+) pocket. Residues asparagine 90 and aspartate 105 each coordinate shikimate. NADP(+)-binding positions include 130 to 134, 154 to 159, and methionine 217; these read GAGGA and NRTHSK. A shikimate-binding site is contributed by tyrosine 219. Glycine 240 provides a ligand contact to NADP(+).

It belongs to the shikimate dehydrogenase family. In terms of assembly, homodimer.

It catalyses the reaction shikimate + NADP(+) = 3-dehydroshikimate + NADPH + H(+). Its pathway is metabolic intermediate biosynthesis; chorismate biosynthesis; chorismate from D-erythrose 4-phosphate and phosphoenolpyruvate: step 4/7. Its function is as follows. Involved in the biosynthesis of the chorismate, which leads to the biosynthesis of aromatic amino acids. Catalyzes the reversible NADPH linked reduction of 3-dehydroshikimate (DHSA) to yield shikimate (SA). The polypeptide is Shikimate dehydrogenase (NADP(+)) (Herminiimonas arsenicoxydans).